Here is a 62-residue protein sequence, read N- to C-terminus: ATP synthase subunit K, mitochondrial (62 aa).

Residues 14 to 30 traverse the membrane as a helical segment; that stretch reads HHLAIATIGTVVALVAP.

F-type ATP synthases have 2 components, the catalytic core F(1) and the membrane-embedded component F(0), linked together by a central stalk and a peripheral stalk. The central stalk, also called rotor shaft, is often seen as part of F(1). The peripheral stalk is seen as part of F(0). F(0) contains the membrane channel next to the rotor. F-type ATP synthases form dimers but each monomer functions independently in ATP generation. The dimer consists of 18 different polypeptides: ATP1 (subunit alpha, part of F(1), 3 molecules per monomer), ATP2 (subunit beta, part of F(1), 3 molecules per monomer), ATP3 (subunit gamma, part of the central stalk), ATP4 (subunit b, part of the peripheral stalk), ATP5/OSCP (subunit 5/OSCP, part of the peripheral stalk), ATP6 (subunit a, part of the peripheral stalk), ATP7 (subunit d, part of the peripheral stalk), ATP8 (subunit 8, part of the peripheral stalk), OLI1 (subunit c, part of the rotor, 10 molecules per monomer), ATP14 (subunit h, part of the peripheral stalk), ATP15 (subunit epsilon, part of the central stalk), ATP16 (subunit delta, part of the central stalk), ATP17 (subunit f, part of the peripheral stalk), ATP18 (subunit i/j, part of the peripheral stalk). Dimer-specific subunits are ATP19 (subunit k, at interface between monomers), ATP20 (subunit g, at interface between monomers), TIM11 (subunit e, at interface between monomers). Also contains subunit L.

The protein resides in the mitochondrion inner membrane. Mitochondrial membrane ATP synthase (F(1)F(0) ATP synthase or Complex V) produces ATP from ADP in the presence of a proton gradient across the membrane which is generated by electron transport complexes of the respiratory chain. F-type ATP synthases consist of two structural domains, F(1) - containing the extramembraneous catalytic core, and F(0) - containing the membrane proton channel, linked together by a central stalk and a peripheral stalk. During catalysis, ATP synthesis in the catalytic domain of F(1) is coupled via a rotary mechanism of the central stalk subunits to proton translocation. Part of the complex F(0) domain. Minor subunit located with subunit a/ATP6 in the membrane. The K chain binds the dimeric form by interacting with the G and E chains. The polypeptide is ATP synthase subunit K, mitochondrial (Pichia angusta (Yeast)).